The sequence spans 104 residues: Chromogranin-A (104 aa).

A disulfide bridge connects residues Cys-17 and Cys-38.

This sequence belongs to the chromogranin/secretogranin protein family. As to quaternary structure, dimer.

Its subcellular location is the cytoplasmic vesicle. The protein resides in the secretory vesicle. It is found in the secreted. Its function is as follows. Chromogranin A probably has a paracrine role in the regulation of secretion or maturation. This chain is Chromogranin-A (CHGA), found in Struthio camelus (Common ostrich).